We begin with the raw amino-acid sequence, 523 residues long: GMP synthase [glutamine-hydrolyzing] (523 aa).

The Glutamine amidotransferase type-1 domain occupies 8–205 (KILILDFGSQ…VVKICGCERN (198 aa)). The Nucleophile role is filled by C85. Active-site residues include H179 and E181. In terms of domain architecture, GMPS ATP-PPase spans 206–398 (WTPENIIEDA…LGLPAEMLNR (193 aa)). 233 to 239 (SGGVDSS) contacts ATP.

As to quaternary structure, homodimer.

The enzyme catalyses XMP + L-glutamine + ATP + H2O = GMP + L-glutamate + AMP + diphosphate + 2 H(+). It participates in purine metabolism; GMP biosynthesis; GMP from XMP (L-Gln route): step 1/1. Its function is as follows. Catalyzes the synthesis of GMP from XMP. In Pasteurella multocida (strain Pm70), this protein is GMP synthase [glutamine-hydrolyzing].